A 241-amino-acid chain; its full sequence is DNA repair protein RecO (241 aa).

The protein belongs to the RecO family.

In terms of biological role, involved in DNA repair and RecF pathway recombination. The sequence is that of DNA repair protein RecO from Yersinia enterocolitica serotype O:8 / biotype 1B (strain NCTC 13174 / 8081).